We begin with the raw amino-acid sequence, 145 residues long: 3-dehydroquinate dehydratase 2 (145 aa).

Tyr22 serves as the catalytic Proton acceptor. Residues Asn73, His79, and Asp86 each coordinate substrate. His101 functions as the Proton donor in the catalytic mechanism. Residues 102 to 103 (IS) and Arg112 each bind substrate.

Belongs to the type-II 3-dehydroquinase family. Homododecamer.

The catalysed reaction is 3-dehydroquinate = 3-dehydroshikimate + H2O. The protein operates within metabolic intermediate biosynthesis; chorismate biosynthesis; chorismate from D-erythrose 4-phosphate and phosphoenolpyruvate: step 3/7. In terms of biological role, catalyzes a trans-dehydration via an enolate intermediate. The polypeptide is 3-dehydroquinate dehydratase 2 (aroQ2) (Corynebacterium efficiens (strain DSM 44549 / YS-314 / AJ 12310 / JCM 11189 / NBRC 100395)).